Consider the following 288-residue polypeptide: 2-hydroxy-6-oxononadienedioate/2-hydroxy-6-oxononatrienedioate hydrolase (288 aa).

Positions 39–274 (LVLLHGSGPG…RCGHWAQWEH (236 aa)) constitute an AB hydrolase-1 domain. The Proton acceptor role is filled by His268.

Belongs to the AB hydrolase superfamily. MhpC family. As to quaternary structure, homodimer.

It carries out the reaction (2Z,4E)-2-hydroxy-6-oxonona-2,4-dienedioate + H2O = (2Z)-2-hydroxypenta-2,4-dienoate + succinate + H(+). It catalyses the reaction (2Z,4E,7E)-2-hydroxy-6-oxonona-2,4,7-trienedioate + H2O = (2Z)-2-hydroxypenta-2,4-dienoate + fumarate + H(+). The protein operates within aromatic compound metabolism; 3-phenylpropanoate degradation. Its function is as follows. Catalyzes the cleavage of the C5-C6 bond of 2-hydroxy-6-oxononadienedioate and 2-hydroxy-6-oxononatrienedioate, a dienol ring fission product of the bacterial meta-cleavage pathway for degradation of phenylpropionic acid. This chain is 2-hydroxy-6-oxononadienedioate/2-hydroxy-6-oxononatrienedioate hydrolase, found in Paraburkholderia phymatum (strain DSM 17167 / CIP 108236 / LMG 21445 / STM815) (Burkholderia phymatum).